Consider the following 229-residue polypeptide: 2-C-methyl-D-erythritol 4-phosphate cytidylyltransferase (229 aa).

The protein belongs to the IspD/TarI cytidylyltransferase family. IspD subfamily.

It carries out the reaction 2-C-methyl-D-erythritol 4-phosphate + CTP + H(+) = 4-CDP-2-C-methyl-D-erythritol + diphosphate. It functions in the pathway isoprenoid biosynthesis; isopentenyl diphosphate biosynthesis via DXP pathway; isopentenyl diphosphate from 1-deoxy-D-xylulose 5-phosphate: step 2/6. Functionally, catalyzes the formation of 4-diphosphocytidyl-2-C-methyl-D-erythritol from CTP and 2-C-methyl-D-erythritol 4-phosphate (MEP). This Clostridium acetobutylicum (strain ATCC 824 / DSM 792 / JCM 1419 / IAM 19013 / LMG 5710 / NBRC 13948 / NRRL B-527 / VKM B-1787 / 2291 / W) protein is 2-C-methyl-D-erythritol 4-phosphate cytidylyltransferase.